We begin with the raw amino-acid sequence, 128 residues long: 2-iminobutanoate/2-iminopropanoate deaminase (128 aa).

Residue R105 participates in substrate binding.

The protein belongs to the RutC family. As to quaternary structure, homotrimer.

It is found in the cytoplasm. It carries out the reaction 2-iminobutanoate + H2O = 2-oxobutanoate + NH4(+). It catalyses the reaction 2-iminopropanoate + H2O = pyruvate + NH4(+). It functions in the pathway amino-acid biosynthesis; L-isoleucine biosynthesis; 2-oxobutanoate from L-threonine. Its function is as follows. Accelerates the release of ammonia from reactive enamine/imine intermediates of the PLP-dependent threonine dehydratase (IlvA) in the low water environment of the cell. It catalyzes the deamination of enamine/imine intermediates to yield 2-ketobutyrate and ammonia. It is required for the detoxification of reactive intermediates of IlvA due to their highly nucleophilic abilities and to avoid they are captured by anthranilate phosphoribosyltransferase (TrpD) to generate PRA, an intermediate in the alternative pyrimidine biosynthetic (APB) pathway. Also required for full activity of IlvE which is involved in the isoleucine biosynthesis. RidA also accelerates the release of pyruvate produced by IlvA from L-serine. The polypeptide is 2-iminobutanoate/2-iminopropanoate deaminase (Salmonella typhimurium (strain LT2 / SGSC1412 / ATCC 700720)).